Reading from the N-terminus, the 283-residue chain is Phosphatidylserine decarboxylase proenzyme (283 aa).

Catalysis depends on charge relay system; for autoendoproteolytic cleavage activity residues aspartate 90, histidine 143, and serine 248. The active-site Schiff-base intermediate with substrate; via pyruvic acid; for decarboxylase activity is serine 248. Position 248 is a pyruvic acid (Ser); by autocatalysis (serine 248).

Belongs to the phosphatidylserine decarboxylase family. PSD-B subfamily. Prokaryotic type I sub-subfamily. In terms of assembly, heterodimer of a large membrane-associated beta subunit and a small pyruvoyl-containing alpha subunit. Pyruvate is required as a cofactor. Post-translationally, is synthesized initially as an inactive proenzyme. Formation of the active enzyme involves a self-maturation process in which the active site pyruvoyl group is generated from an internal serine residue via an autocatalytic post-translational modification. Two non-identical subunits are generated from the proenzyme in this reaction, and the pyruvate is formed at the N-terminus of the alpha chain, which is derived from the carboxyl end of the proenzyme. The autoendoproteolytic cleavage occurs by a canonical serine protease mechanism, in which the side chain hydroxyl group of the serine supplies its oxygen atom to form the C-terminus of the beta chain, while the remainder of the serine residue undergoes an oxidative deamination to produce ammonia and the pyruvoyl prosthetic group on the alpha chain. During this reaction, the Ser that is part of the protease active site of the proenzyme becomes the pyruvoyl prosthetic group, which constitutes an essential element of the active site of the mature decarboxylase.

Its subcellular location is the cell membrane. It catalyses the reaction a 1,2-diacyl-sn-glycero-3-phospho-L-serine + H(+) = a 1,2-diacyl-sn-glycero-3-phosphoethanolamine + CO2. The protein operates within phospholipid metabolism; phosphatidylethanolamine biosynthesis; phosphatidylethanolamine from CDP-diacylglycerol: step 2/2. Its function is as follows. Catalyzes the formation of phosphatidylethanolamine (PtdEtn) from phosphatidylserine (PtdSer). In Francisella tularensis subsp. novicida (strain U112), this protein is Phosphatidylserine decarboxylase proenzyme.